A 971-amino-acid polypeptide reads, in one-letter code: Protein cwh43 (971 aa).

Positions Met-1 to Glu-242 are PGAP2-like. Transmembrane regions (helical) follow at residues Val-15–Leu-35, Val-71–Phe-91, Val-101–Val-121, Trp-129–Ser-149, Ile-161–Ile-181, Ile-188–Leu-208, Val-286–Phe-306, Ile-313–Leu-333, Lys-336–Tyr-356, Phe-366–Ile-386, Ile-397–Asn-417, Gln-432–Gln-452, Ile-467–Leu-487, Tyr-509–Leu-529, Ser-532–Ile-552, Gly-555–Ala-575, Val-588–Ala-608, Thr-622–Gly-642, and Leu-673–Pro-693. A PGAP2IP-like region spans residues Lys-243–Asp-971. Residue His-826 is part of the active site.

This sequence in the N-terminal section; belongs to the PGAP2 family. It in the C-terminal section; belongs to the PGAP2IP family.

The protein resides in the cell membrane. The protein localises to the endoplasmic reticulum membrane. Its function is as follows. Involved in the maintenance of cell wall integrity. Required for the replacement of the diacylglycerol moiety by ceramides during GPI-anchor maturation. This is Protein cwh43 (cwh43) from Schizosaccharomyces pombe (strain 972 / ATCC 24843) (Fission yeast).